Reading from the N-terminus, the 461-residue chain is Fumarate hydratase class II (461 aa).

Residues 97 to 99 (SGT), Arg-125, 128 to 131 (HPND), 138 to 140 (SSN), and Thr-186 contribute to the substrate site. Catalysis depends on His-187, which acts as the Proton donor/acceptor. Ser-317 is an active-site residue. Substrate is bound by residues Ser-318 and 323–325 (KVN).

The protein belongs to the class-II fumarase/aspartase family. Fumarase subfamily. In terms of assembly, homotetramer.

The protein resides in the cytoplasm. The enzyme catalyses (S)-malate = fumarate + H2O. It functions in the pathway carbohydrate metabolism; tricarboxylic acid cycle; (S)-malate from fumarate: step 1/1. Functionally, involved in the TCA cycle. Catalyzes the stereospecific interconversion of fumarate to L-malate. The protein is Fumarate hydratase class II of Ralstonia nicotianae (strain ATCC BAA-1114 / GMI1000) (Ralstonia solanacearum).